Consider the following 431-residue polypeptide: GTPase Obg (431 aa).

In terms of domain architecture, Obg spans 1 to 158 (MFVDQVKINV…REIRLELKVL (158 aa)). The disordered stretch occupies residues 125–145 (GNIHFASPKNPAPEIAENGEP). In terms of domain architecture, OBG-type G spans 159 to 335 (ADVGLVGFPS…LLQRTADMLA (177 aa)). Residues 165–172 (GFPSVGKS), 190–194 (FTTLV), 212–215 (DLPG), 282–285 (NKMD), and 316–318 (SAL) each bind GTP. Positions 172 and 192 each coordinate Mg(2+). Residues 353-431 (YNFQPEAEFT…IDDFTFEYMA (79 aa)) enclose the OCT domain.

It belongs to the TRAFAC class OBG-HflX-like GTPase superfamily. OBG GTPase family. In terms of assembly, monomer. Mg(2+) serves as cofactor.

The protein localises to the cytoplasm. An essential GTPase which binds GTP, GDP and possibly (p)ppGpp with moderate affinity, with high nucleotide exchange rates and a fairly low GTP hydrolysis rate. Plays a role in control of the cell cycle, stress response, ribosome biogenesis and in those bacteria that undergo differentiation, in morphogenesis control. The polypeptide is GTPase Obg (Levilactobacillus brevis (strain ATCC 367 / BCRC 12310 / CIP 105137 / JCM 1170 / LMG 11437 / NCIMB 947 / NCTC 947) (Lactobacillus brevis)).